We begin with the raw amino-acid sequence, 206 residues long: N-(5'-phosphoribosyl)anthranilate isomerase (206 aa).

Belongs to the TrpF family.

It carries out the reaction N-(5-phospho-beta-D-ribosyl)anthranilate = 1-(2-carboxyphenylamino)-1-deoxy-D-ribulose 5-phosphate. The protein operates within amino-acid biosynthesis; L-tryptophan biosynthesis; L-tryptophan from chorismate: step 3/5. The sequence is that of N-(5'-phosphoribosyl)anthranilate isomerase from Chlamydia felis (strain Fe/C-56) (Chlamydophila felis).